The primary structure comprises 180 residues: uncharacterized protein (180 aa).

This is an uncharacterized protein from Clostridium acetobutylicum (strain ATCC 824 / DSM 792 / JCM 1419 / IAM 19013 / LMG 5710 / NBRC 13948 / NRRL B-527 / VKM B-1787 / 2291 / W).